An 842-amino-acid polypeptide reads, in one-letter code: DNA topoisomerase-like protein cin-4 (842 aa).

Positions 1–26 (MSEEDRNVFTSIDKKGGGSKQMDDLN) are enriched in basic and acidic residues. The segment at 1-50 (MSEEDRNVFTSIDKKGGGSKQMDDLNQKCPKRKTSKLKGIPKLEDANDAG) is disordered. The Topo IIA-type catalytic domain occupies 314 to 783 (IPCLVDGLKP…TWQDLWITDL (470 aa)).

It belongs to the type II topoisomerase family.

In terms of biological role, plays a role in the removal of cohesin from kinetochores on mitotic chromosomes and is required for centromere resolution. The sequence is that of DNA topoisomerase-like protein cin-4 from Caenorhabditis elegans.